A 182-amino-acid chain; its full sequence is ADP-ribosylation factor-like protein 3 (182 aa).

The N-myristoyl glycine moiety is linked to residue G2. S5 carries the post-translational modification Phosphoserine. Residues 24 to 31, T48, 67 to 71, G70, 126 to 129, and 159 to 161 contribute to the GTP site; these read GLDNAGKT, DIGGQ, NKQD, and SAL. 2 residues coordinate Mg(2+): T31 and T48.

It belongs to the small GTPase superfamily. Arf family. In terms of assembly, found in a complex with ARL3, RP2 and UNC119 (or UNC119B); RP2 induces hydrolysis of GTP ARL3 in the complex, leading to the release of UNC119 (or UNC119B). Interacts with RP2; interaction is direct and stimulated with the activated GTP-bound form of ARL3. Interacts with SYS1. The GTP-bound form interacts with ARL2BP and PDE6D. Microtubule-associated protein. May interact with GOLGA4. Interacts with GGA1; the interaction recruits PKD1:PKD2 complex to trans-Golgi network and is required for ciliary targeting of PKD1:PKD2 complex. Interacts with DNAAF9. As to expression, expressed in the retina. Strongly expressed in connecting cilium, the myoid region of the inner segments (IS) and in cone photoreceptors (at protein level).

Its subcellular location is the golgi apparatus membrane. The protein localises to the cytoplasm. It is found in the cytoskeleton. The protein resides in the spindle. It localises to the nucleus. Its subcellular location is the microtubule organizing center. The protein localises to the centrosome. It is found in the cell projection. The protein resides in the cilium. Small GTP-binding protein which cycles between an inactive GDP-bound and an active GTP-bound form, and the rate of cycling is regulated by guanine nucleotide exchange factors (GEF) and GTPase-activating proteins (GAP). Required for normal cytokinesis and cilia signaling. Requires assistance from GTPase-activating proteins (GAPs) like RP2 and PDE6D, in order to cycle between inactive GDP-bound and active GTP-bound forms. Required for targeting proteins to the cilium, including myristoylated NPHP3 and prenylated INPP5E. Targets NPHP3 to the ciliary membrane by releasing myristoylated NPHP3 from UNC119B cargo adapter into the cilium. Required for PKD1:PKD2 complex targeting from the trans-Golgi network to the cilium. This is ADP-ribosylation factor-like protein 3 (ARL3) from Homo sapiens (Human).